The chain runs to 141 residues: SsrA-binding protein (141 aa).

Belongs to the SmpB family.

The protein resides in the cytoplasm. Its function is as follows. Required for rescue of stalled ribosomes mediated by trans-translation. Binds to transfer-messenger RNA (tmRNA), required for stable association of tmRNA with ribosomes. tmRNA and SmpB together mimic tRNA shape, replacing the anticodon stem-loop with SmpB. tmRNA is encoded by the ssrA gene; the 2 termini fold to resemble tRNA(Ala) and it encodes a 'tag peptide', a short internal open reading frame. During trans-translation Ala-aminoacylated tmRNA acts like a tRNA, entering the A-site of stalled ribosomes, displacing the stalled mRNA. The ribosome then switches to translate the ORF on the tmRNA; the nascent peptide is terminated with the 'tag peptide' encoded by the tmRNA and targeted for degradation. The ribosome is freed to recommence translation, which seems to be the essential function of trans-translation. The polypeptide is SsrA-binding protein (Ureaplasma parvum serovar 3 (strain ATCC 27815 / 27 / NCTC 11736)).